Reading from the N-terminus, the 115-residue chain is Ribonuclease P protein component (115 aa).

This sequence belongs to the RnpA family. In terms of assembly, consists of a catalytic RNA component (M1 or rnpB) and a protein subunit.

The enzyme catalyses Endonucleolytic cleavage of RNA, removing 5'-extranucleotides from tRNA precursor.. Its function is as follows. RNaseP catalyzes the removal of the 5'-leader sequence from pre-tRNA to produce the mature 5'-terminus. It can also cleave other RNA substrates such as 4.5S RNA. The protein component plays an auxiliary but essential role in vivo by binding to the 5'-leader sequence and broadening the substrate specificity of the ribozyme. This Bacillus mycoides (strain KBAB4) (Bacillus weihenstephanensis) protein is Ribonuclease P protein component.